Consider the following 1412-residue polypeptide: MNTKVSRQYAKISENSIQKISLALATPEDVLEWSRGEVHRPETINYKTFKPERGGLFDELIFGPLVDYKCSVCGRKYRKSNENQLCIATKECKIRGSRILSKMARRYSMGHIALNAPILHFWFFKIDHSIIAKLLGLKVFEGNSKVPTTITKTAIENLIYYKSHIVLETGGLKSLEQNKIIDISEAGLIYKNALIEIIEFYPPGSEEHNALAESISELADVTSSKIGREYGVDYYELNEIIEEFSSARIATGALAIEYLLDKIDLRAEKAAVEAELAGVQKQIYKNKKIILKNQKRDKLYKRLQVINAFINSGQDPKMMIIRNLPVIPADLRPLVQLDGSRHSTSDCNELYRRIIIRNNRLKRWKAAHAPVIIIQNEMRMLQEAVDALIDNQKKSTNQVTTKEGRPLKSISDALTGKKGRFRQNLLGKRVDYSGRSVIVVGPKLKMHQAGLPRKMAAVLFEPWIIRNLIQEKKVGSIKMARKMIEEENPIIWPHVAKVIQNKPIILNRAPTLHRLSIQAFEPVLVRAKAIQLHPLVTAGFNADFDGDQMAVHIPISPEAIRETQELMFADKNILGPKDGEPIVNPSQDMVLGLYYLSQEKAGAKGEGSFFSTYEAMLKAYEFRSVELHARVVLPFEQVKPFIAKTMRGHLISTVGKFILNNIFPANFPFIFDDNVDELELNYPSQIKKYVLPYGTNFREYIQNLKVNEPLNKKAIAKIVRQIFDTYDGLLAKEDIATVIDQLDFGNYQNCVLLYEKLRDYKKQKLPVPHLSKLSEFTIFEYSQLYKQLQQNGPVESYRVLEDHEKAELLEKIWFKYNNMVCSILDKIKDLGFHYSTLSGTSIAISDIKMAPKKHEFIKEGENYINKLNTFYAKGLITDDERYVLAIAKWTQIKNDIQEDLNQSIKDDNQNSLVMMMKSGARGNISNFVQLAGMRGLMANNVKALKVDAENERVVRSIVEVPVKSSFLEGLTSFEFYSSTHGARKGLTDTALNTAKSGYLTRRLVDVAQNIVVVAEDCFSDFGFVVKDIIDTKTNTIIVPLLERIEGRFLNKDVYDSRGIKLASAGTMVDLQTAKKIVAAGIKKVEIRSILSCHIKNSVCKKCYGKDLATNRLVSIGEAVGIIAAQSIGEPGTQLTMRTFHTGGVANVEDITGGFTRLIELIDSHEHPWGKPAKISPYYGIITKISDLAEKNAANKGFLITIEYKTSKNEKAEHIIRIEQSQKLRVKVGDKVIPGQKLVEGPIILKELLAVSDARTLQNYLLKEIQRIYRMQGISISDKYIEIIIRQMLSKVQIIENGDSNFFIGSIVDISDYQEVNGQLISQNKNPAFGNVIVKGAKQIPLLSNSFLAAASYQETSKILVHSVISSQIDKLEGLKENIIVGHKIPAGTNSNYEPKSKFDIRNPLSFFMKNNR.

Residues Asp-543, Asp-545, and Asp-547 each contribute to the Mg(2+) site. Cys-1017, Cys-1092, Cys-1099, and Cys-1102 together coordinate Zn(2+).

It belongs to the RNA polymerase beta' chain family. The RNAP catalytic core consists of 2 alpha, 1 beta, 1 beta' and 1 omega subunit. When a sigma factor is associated with the core the holoenzyme is formed, which can initiate transcription. Mg(2+) serves as cofactor. It depends on Zn(2+) as a cofactor.

It carries out the reaction RNA(n) + a ribonucleoside 5'-triphosphate = RNA(n+1) + diphosphate. DNA-dependent RNA polymerase catalyzes the transcription of DNA into RNA using the four ribonucleoside triphosphates as substrates. The polypeptide is DNA-directed RNA polymerase subunit beta' (Mesomycoplasma hyopneumoniae (strain 7448) (Mycoplasma hyopneumoniae)).